The primary structure comprises 418 residues: AA11 family lytic polysaccharide monooxygenase B (418 aa).

An N-terminal signal peptide occupies residues 1-21 (MMFSKSGLVAVAMLGASAVEA). Cu(+)-binding residues include His-22 and His-82. 3 cysteine pairs are disulfide-bonded: Cys-50-Cys-165, Cys-87-Cys-113, and Cys-206-Cys-240. Asn-120 and Asn-134 each carry an N-linked (GlcNAc...) asparagine glycan. The interval 226–345 (DGNPSNLQPA…SSSSSNGALT (120 aa)) is disordered. The span at 254–345 (SPSTPSTSSS…SSSSSNGALT (92 aa)) shows a compositional bias: low complexity.

Belongs to the polysaccharide monooxygenase AA11 family. Cu(2+) is required as a cofactor.

It localises to the secreted. Functionally, lytic polysaccharide monooxygenase (LPMO)-like protein that acts as a strict peroxygenase and does not catalyze a monooxygenase reaction. It is indeed hardly active on chitin, while being very active on soluble oligomers of N-acetylglucosamine. Cleaves the glycosidic bonds byoxidizing the C1 position. Also unable to oxidize cellopentaose. Probably breaks glycosidic bonds in non-polymeric substrates possibly carbohydrates in the cell wall of the fungus or its competitors. In the presence of chitotetraose, the enzyme can withstand considerable amounts of H(2)O(2), which it uses to efficiently and stoichiometrically convert this substrate. This chain is AA11 family lytic polysaccharide monooxygenase B, found in Aspergillus fumigatus (strain ATCC MYA-4609 / CBS 101355 / FGSC A1100 / Af293) (Neosartorya fumigata).